Reading from the N-terminus, the 159-residue chain is IQSTSMDQGILTEDSMNSFIRTLIQAGIWKNKLPKQTARTKDGMQTTVKRTEAEADAMASKGFQPIVSVDAELLRQQRRFSSPRVLLSENAPLEPPPLYLTEEPLVQNRTSRRKREGKRHRGEYSVCDSESRWVTDKSSAVDIRGHQVTVLGEIRMGPS.

The N-terminal stretch at 1 to 3 (IQS) is a signal peptide. Residues 4-115 (TSMDQGILTE…VQNRTSRRKR (112 aa)) constitute a propeptide that is removed on maturation. Residues 91-129 (APLEPPPLYLTEEPLVQNRTSRRKREGKRHRGEYSVCDS) form a disordered region. A glycan (N-linked (GlcNAc...) asparagine) is linked at Asn108. Basic residues predominate over residues 110–121 (TSRRKREGKRHR).

Belongs to the NGF-beta family.

Its subcellular location is the secreted. Its function is as follows. Seems to promote the survival of visceral and proprioceptive sensory neurons. This Candoia carinata (Papuan tree boa) protein is Neurotrophin-3 (NTF3).